Consider the following 711-residue polypeptide: Dixin (711 aa).

A lipid anchor (N-myristoyl glycine) is attached at Leu2. Val13 bears the Phosphoserine mark. The region spanning 20–153 is the Calponin-homology (CH) domain; the sequence is EQQLQAYVAW…LVLALAAHFK (134 aa). The segment at 153 to 326 is actin-binding; it reads KPGSSRTVSQ…LEKEMEEAKK (174 aa). Ser212 is subject to Phosphoserine. 3 disordered regions span residues 233–258, 271–298, and 584–623; these read GQQK…AKSE, VIIP…PGSR, and TQKK…SSPA. A compositionally biased stretch (low complexity) spans 237-254; the sequence is SPSESSCSSLTSPSPIHS. Position 257 is a phosphoserine (Ser257). The segment covering 278–295 has biased composition (basic and acidic residues); that stretch reads IENRTDEPDSPSSRDWRP. Residues 279–452 are a coiled coil; sequence ENRTDEPDSP…NRLLGEYKKE (174 aa). The span at 597 to 623 shows a compositional bias: polar residues; it reads PRNQASSEYRASWPPNSTLPHSQSSPA. A DIX domain is found at 600-680; the sequence is QASSEYRASW…HFKALDPEFG (81 aa). Ser618 carries the post-translational modification Phosphoserine.

This sequence belongs to the DIXDC1 family. In terms of assembly, may bind filamentous actin. Directly interacts (via DIX domain) with DVL2 (via DIX domain). Interacts with gamma-tubulin. Interacts with the complex composed of DVL2 and Rac. Interacts with AXIN1; competes with MAP3K1. Interacts with MAP3K4 preventing MAP3K4 interaction with AXIN1. Phosphorylated on tyrosine and serine residues. Post-translationally, polyubiquitinated, leading to its proteasomal degradation. WNT3A signaling increases DIXDC1 protein levels by inhibiting its ubiquitination and subsequent degradation. In terms of tissue distribution, abundantly expressed in brain and testis and to a lower extent in lung, kidney, colon, ovary and urinary bladder. Expressed in brain, liver, testis and spleen (at protein level). Expressed throughout the brain with strong expression in main and accessory olfactory bulbs, cerebral cortex, piriform cortex, hippocampus, habenular nucleus, dorsal thalamus, superior and inferior colliculi and cerebellum.

Its subcellular location is the cell junction. The protein resides in the focal adhesion. It localises to the cytoplasm. The protein localises to the cytoskeleton. It is found in the stress fiber. Functionally, positive effector of the Wnt signaling pathway; activates WNT3A signaling via DVL2. Regulates JNK activation by AXIN1 and DVL2. The chain is Dixin (Dixdc1) from Mus musculus (Mouse).